Here is a 338-residue protein sequence, read N- to C-terminus: Holliday junction branch migration complex subunit RuvB (338 aa).

Residues 4–185 (EDQKILDAKP…FGIVAHMQFY (182 aa)) are large ATPase domain (RuvB-L). ATP-binding positions include Leu-24, Arg-25, Gly-66, Lys-69, Thr-70, Thr-71, 132-134 (EDF), Arg-175, Tyr-185, and Arg-222. Thr-70 is a binding site for Mg(2+). The small ATPAse domain (RuvB-S) stretch occupies residues 186–256 (PVSDLKLIAK…IVDNALNKLH (71 aa)). The interval 259-338 (ARGLDETDLK…LQIPYQTGLS (80 aa)) is head domain (RuvB-H). DNA is bound by residues Arg-314 and Arg-319.

It belongs to the RuvB family. As to quaternary structure, homohexamer. Forms an RuvA(8)-RuvB(12)-Holliday junction (HJ) complex. HJ DNA is sandwiched between 2 RuvA tetramers; dsDNA enters through RuvA and exits via RuvB. An RuvB hexamer assembles on each DNA strand where it exits the tetramer. Each RuvB hexamer is contacted by two RuvA subunits (via domain III) on 2 adjacent RuvB subunits; this complex drives branch migration. In the full resolvosome a probable DNA-RuvA(4)-RuvB(12)-RuvC(2) complex forms which resolves the HJ.

The protein resides in the cytoplasm. It catalyses the reaction ATP + H2O = ADP + phosphate + H(+). Functionally, the RuvA-RuvB-RuvC complex processes Holliday junction (HJ) DNA during genetic recombination and DNA repair, while the RuvA-RuvB complex plays an important role in the rescue of blocked DNA replication forks via replication fork reversal (RFR). RuvA specifically binds to HJ cruciform DNA, conferring on it an open structure. The RuvB hexamer acts as an ATP-dependent pump, pulling dsDNA into and through the RuvAB complex. RuvB forms 2 homohexamers on either side of HJ DNA bound by 1 or 2 RuvA tetramers; 4 subunits per hexamer contact DNA at a time. Coordinated motions by a converter formed by DNA-disengaged RuvB subunits stimulates ATP hydrolysis and nucleotide exchange. Immobilization of the converter enables RuvB to convert the ATP-contained energy into a lever motion, pulling 2 nucleotides of DNA out of the RuvA tetramer per ATP hydrolyzed, thus driving DNA branch migration. The RuvB motors rotate together with the DNA substrate, which together with the progressing nucleotide cycle form the mechanistic basis for DNA recombination by continuous HJ branch migration. Branch migration allows RuvC to scan DNA until it finds its consensus sequence, where it cleaves and resolves cruciform DNA. The polypeptide is Holliday junction branch migration complex subunit RuvB (Oenococcus oeni (strain ATCC BAA-331 / PSU-1)).